The chain runs to 122 residues: Large ribosomal subunit protein uL14 (122 aa).

The protein belongs to the universal ribosomal protein uL14 family. As to quaternary structure, part of the 50S ribosomal subunit. Forms a cluster with proteins L3 and L19. In the 70S ribosome, L14 and L19 interact and together make contacts with the 16S rRNA in bridges B5 and B8.

Binds to 23S rRNA. Forms part of two intersubunit bridges in the 70S ribosome. The sequence is that of Large ribosomal subunit protein uL14 from Thermodesulfovibrio yellowstonii (strain ATCC 51303 / DSM 11347 / YP87).